Consider the following 409-residue polypeptide: uncharacterized protein (409 aa).

Belongs to the mimivirus L17x/L18x family.

This is an uncharacterized protein from Acanthamoeba polyphaga mimivirus (APMV).